We begin with the raw amino-acid sequence, 232 residues long: Large ribosomal subunit protein uL1 (232 aa).

Belongs to the universal ribosomal protein uL1 family. In terms of assembly, part of the 50S ribosomal subunit.

In terms of biological role, binds directly to 23S rRNA. The L1 stalk is quite mobile in the ribosome, and is involved in E site tRNA release. Protein L1 is also a translational repressor protein, it controls the translation of the L11 operon by binding to its mRNA. The protein is Large ribosomal subunit protein uL1 of Ruegeria sp. (strain TM1040) (Silicibacter sp.).